Consider the following 796-residue polypeptide: Protein translocase subunit SecA 2 (796 aa).

Residues Gln-84, Gly-102–Thr-106, and Asp-496 contribute to the ATP site.

This sequence belongs to the SecA family. In terms of assembly, monomer and homodimer. Part of the essential Sec protein translocation apparatus which comprises SecA, SecYEG and auxiliary proteins SecDF. Other proteins may also be involved.

Its subcellular location is the cell membrane. The protein localises to the cytoplasm. The catalysed reaction is ATP + H2O + cellular proteinSide 1 = ADP + phosphate + cellular proteinSide 2.. Its function is as follows. Part of the Sec protein translocase complex. Interacts with the SecYEG preprotein conducting channel. Has a central role in coupling the hydrolysis of ATP to the transfer of proteins into and across the cell membrane, serving as an ATP-driven molecular motor driving the stepwise translocation of polypeptide chains across the membrane. In Staphylococcus aureus (strain Mu3 / ATCC 700698), this protein is Protein translocase subunit SecA 2.